We begin with the raw amino-acid sequence, 570 residues long: Periplasmic trehalase (570 aa).

Residues 1-34 (MIPPEIRRSVLLQKAIKLALAGTLLTFASFSATA) form the signal peptide. Substrate-binding positions include Arg-159, 166-167 (WD), Asn-203, 212-214 (RSQ), 284-286 (RPE), and Gly-317. Residues Asp-319 and Glu-503 each act as proton donor/acceptor in the active site. Glu-518 contributes to the substrate binding site. The segment at 544 to 570 (KPCDSVPSTRPASLSATPTKTPSAATQ) is disordered. Over residues 554–570 (PASLSATPTKTPSAATQ) the composition is skewed to low complexity.

It belongs to the glycosyl hydrolase 37 family. Monomer.

The protein localises to the periplasm. The catalysed reaction is alpha,alpha-trehalose + H2O = alpha-D-glucose + beta-D-glucose. Functionally, provides the cells with the ability to utilize trehalose at high osmolarity by splitting it into glucose molecules that can subsequently be taken up by the phosphotransferase-mediated uptake system. The sequence is that of Periplasmic trehalase from Salmonella paratyphi A (strain AKU_12601).